The following is a 181-amino-acid chain: Adenylyl-sulfate kinase (181 aa).

12 to 19 is a binding site for ATP; that stretch reads GLSGAGKS. Serine 86 serves as the catalytic Phosphoserine intermediate.

The protein belongs to the APS kinase family.

The enzyme catalyses adenosine 5'-phosphosulfate + ATP = 3'-phosphoadenylyl sulfate + ADP + H(+). It functions in the pathway sulfur metabolism; hydrogen sulfide biosynthesis; sulfite from sulfate: step 2/3. Catalyzes the synthesis of activated sulfate. The sequence is that of Adenylyl-sulfate kinase from Microcystis aeruginosa (strain NIES-843 / IAM M-2473).